The sequence spans 511 residues: Voltage-gated potassium channel KCNC1 (511 aa).

The Cytoplasmic portion of the chain corresponds to 1–190; the sequence is MGQGDESERI…EDPYSSRYAR (190 aa). Residue serine 44 is modified to Phosphoserine. The Zn(2+) site is built by histidine 77, cysteine 83, cysteine 104, and cysteine 105. Residues 121–147 are disordered; sequence SFGGAPLDNSADDADADGPGDSGDGED. Residues serine 130, serine 142, serine 158, and serine 160 each carry the phosphoserine modification. Positions 130 to 147 are enriched in acidic residues; the sequence is SADDADADGPGDSGDGED. Residues 191–209 form a helical membrane-spanning segment; it reads YVAFASLFFILVSITTFCL. N-linked (GlcNAc...) asparagine glycosylation is found at asparagine 220 and asparagine 229. A helical membrane pass occupies residues 248–267; it reads IEGVCVVWFTFEFLMRVVFC. Over 268–276 the chain is Cytoplasmic; that stretch reads PNKVEFIKN. The chain crosses the membrane as a helical span at residues 277-295; the sequence is SLNIIDFVAILPFYLEVGL. The chain crosses the membrane as a helical; Voltage-sensor span at residues 309 to 331; that stretch reads FLRVVRFVRILRIFKLTRHFVGL. Topologically, residues 332–344 are cytoplasmic; sequence RVLGHTLRASTNE. Residues 345-366 form a helical membrane-spanning segment; it reads FLLLIIFLALGVLIFATMIYYA. Residues threonine 400, leucine 401, glycine 402, and tyrosine 403 each coordinate K(+). The Selectivity filter signature appears at 400-405; it reads TLGYGD. The helical transmembrane segment at 415–436 threads the bilayer; it reads LVGALCALAGVLTIAMPVPVIV. Residues 437–511 lie on the Cytoplasmic side of the membrane; it reads NNFGMYYSLA…GRKPLRGMSI (75 aa). A Phosphoserine modification is found at serine 474. Threonine 483 carries the phosphothreonine modification.

It belongs to the potassium channel family. C (Shaw) (TC 1.A.1.2) subfamily. Kv3.1/KCNC1 sub-subfamily. Homotetramer. Homomultimer. Heteromultimer with KCNG3, KCNG4 and KCNV2. Heteromultimer with KCNC2. Heterotetramer with KCNC3. Interacts with the ancillary subunits KCNE1 and KCNE2; the interaction modulates channel activity. Post-translationally, N-glycosylated; contains sialylated glycans. Detected in cerebellum. Detected in brain (at protein level). Detected in brain.

The protein resides in the cell membrane. It localises to the cell projection. Its subcellular location is the axon. The protein localises to the presynaptic cell membrane. The enzyme catalyses K(+)(in) = K(+)(out). Functionally, voltage-gated potassium channel that opens in response to the voltage difference across the membrane and through which potassium ions pass in accordance with their electrochemical gradient. The mechanism is time-dependent and inactivation is slow. Plays an important role in the rapid repolarization of fast-firing brain neurons. Can form functional homotetrameric channels and heterotetrameric channels that contain variable proportions of KCNC2, and possibly other family members as well. Contributes to fire sustained trains of very brief action potentials at high frequency in pallidal neurons. The protein is Voltage-gated potassium channel KCNC1 of Mus musculus (Mouse).